The primary structure comprises 208 residues: Large ribosomal subunit protein bL25 (208 aa).

It belongs to the bacterial ribosomal protein bL25 family. CTC subfamily. In terms of assembly, part of the 50S ribosomal subunit; part of the 5S rRNA/L5/L18/L25 subcomplex. Contacts the 5S rRNA. Binds to the 5S rRNA independently of L5 and L18.

Functionally, this is one of the proteins that binds to the 5S RNA in the ribosome where it forms part of the central protuberance. In Phenylobacterium zucineum (strain HLK1), this protein is Large ribosomal subunit protein bL25.